The sequence spans 607 residues: CUB and zona pellucida-like domain-containing protein 1 (607 aa).

An N-terminal signal peptide occupies residues 1 to 19; the sequence is MEVTGRLFIWAILAVSCRA. Over 20-568 the chain is Lumenal; sequence QLNSTAAEGR…AEISKQPLSH (549 aa). N-linked (GlcNAc...) asparagine glycosylation is present at Asn-22. The cysteines at positions 32 and 58 are disulfide-linked. CUB domains lie at 32-146 and 154-265; these read CTAS…YFFS and CGGY…YAST. N-linked (GlcNAc...) asparagine glycosylation occurs at Asn-67. Cystine bridges form between Cys-85/Cys-107 and Cys-154/Cys-180. Asn-195 is a glycosylation site (N-linked (GlcNAc...) asparagine). Cys-207 and Cys-229 are joined by a disulfide. One can recognise a ZP domain in the interval 276–519; sequence SCASDKMRVI…SRCNQGCVSR (244 aa). A glycan (N-linked (GlcNAc...) asparagine) is linked at Asn-419. A disulfide bond links Cys-442 and Cys-498. Residues 569–589 traverse the membrane as a helical segment; it reads LHLFSFMVLALNVVIVVTATV. Residues 590-607 are Cytoplasmic-facing; the sequence is RHFLNRWKDHGYQKLQVY.

In terms of tissue distribution, expressed predominantly in epithelium of uterus and oviduct.

The protein localises to the zymogen granule membrane. Functionally, localized to zymogen granules, where it functions in trypsinogen activation. May indirectly regulate cell motility, cell-cell and cell/extracellular matrix interactions. The protein is CUB and zona pellucida-like domain-containing protein 1 of Rattus norvegicus (Rat).